The primary structure comprises 212 residues: Outer surface protein C (212 aa).

The N-terminal stretch at 1 to 18 (MKKNTLSAILMTLFLFIS) is a signal peptide. Cys-19 is lipidated: N-palmitoyl cysteine. Residue Cys-19 is the site of S-diacylglycerol cysteine attachment.

It belongs to the OspC lipoprotein family. As to quaternary structure, homodimer. Interacts with tick Ixodes ricinus salivary protein Iric-1. Binds human (host) plasminogen. The N-terminus is blocked.

It localises to the cell outer membrane. It is found in the cell surface. Its function is as follows. Major immunodominant protein in mammalian hosts. Required for initial stages of mammalian infection. Inhibits macrophage-mediated phagocytosis of the bacteria. Binds human plasminogen; this probably confers an extracellular protease activity on the bacteria that allows it to traverse tissue. Unlike closely related strain B31, its interaction with Ixodes ricinus salivary protein Iric-1 does not protect against antibody-mediated destruction in vitro. The polypeptide is Outer surface protein C (Borreliella afzelii (strain PKo) (Borrelia afzelii)).